The following is a 585-amino-acid chain: Arginine--tRNA ligase (585 aa).

Positions 131–141 match the 'HIGH' region motif; sequence ANPTGPMHVGH.

The protein belongs to the class-I aminoacyl-tRNA synthetase family. As to quaternary structure, monomer.

It is found in the cytoplasm. It carries out the reaction tRNA(Arg) + L-arginine + ATP = L-arginyl-tRNA(Arg) + AMP + diphosphate. The chain is Arginine--tRNA ligase from Brucella melitensis biotype 1 (strain ATCC 23456 / CCUG 17765 / NCTC 10094 / 16M).